The chain runs to 490 residues: Betaine aldehyde dehydrogenase (490 aa).

Serine 26, isoleucine 27, and aspartate 93 together coordinate K(+). Residue 150-152 (GAW) coordinates NAD(+). The active-site Charge relay system is lysine 162. Position 176-179 (176-179 (KPSE)) interacts with NAD(+). Position 180 (valine 180) interacts with K(+). NAD(+) is bound at residue 230–233 (GVAT). Leucine 246 contacts K(+). The Proton acceptor role is filled by glutamate 252. Residues glycine 254, cysteine 286, and glutamate 387 each contribute to the NAD(+) site. Cysteine 286 acts as the Nucleophile in catalysis. Cysteine sulfenic acid (-SOH) is present on cysteine 286. K(+) contacts are provided by lysine 457 and glycine 460. Residue glutamate 464 is the Charge relay system of the active site.

This sequence belongs to the aldehyde dehydrogenase family. In terms of assembly, dimer of dimers. It depends on K(+) as a cofactor.

The catalysed reaction is betaine aldehyde + NAD(+) + H2O = glycine betaine + NADH + 2 H(+). It functions in the pathway amine and polyamine biosynthesis; betaine biosynthesis via choline pathway; betaine from betaine aldehyde: step 1/1. Functionally, involved in the biosynthesis of the osmoprotectant glycine betaine. Catalyzes the irreversible oxidation of betaine aldehyde to the corresponding acid. This chain is Betaine aldehyde dehydrogenase, found in Stutzerimonas stutzeri (strain A1501) (Pseudomonas stutzeri).